The chain runs to 814 residues: Rho GTPase-activating protein 26 (814 aa).

Residues 7-262 enclose the BAR domain; sequence EFSDCCLDSP…MKENPLEHKT (256 aa). The region spanning 265 to 369 is the PH domain; sequence PYTMEGYLYV…WMEAMDGREP (105 aa). The Rho-GAP domain occupies 383 to 568; that stretch reads AQLDSIGFSI…ILIENHEKIF (186 aa). Low complexity predominate over residues 624 to 648; that stretch reads LESVSSNPNSILNSSSSLQPNMNSS. The interval 624–696 is disordered; the sequence is LESVSSNPNS…MPTSSTSSDS (73 aa). Over residues 662 to 672 the composition is skewed to pro residues; that stretch reads SLPPNPSPTSP. Serine 668 is modified (phosphoserine). A Phosphothreonine modification is found at threonine 670. Position 671 is a phosphoserine (serine 671). A compositionally biased stretch (low complexity) spans 673-696; sequence LSPSWPMFSAPSSPMPTSSTSSDS. In terms of domain architecture, SH3 spans 756-814; the sequence is TPFRKAKALYACKAEHDSELSFTAGTVFDNVHPSQEPGWLEGTLNGKTGLIPENYVEFL.

In terms of assembly, interacts with NYAP1, NYAP2 and MYO16. Interacts with MICAL1 and WDR44. Binds to the C-terminus of PTK2/FAK1. As to quaternary structure, (Microbial infection) Interacts with human parainfluenza virus type 2 proteins P and V. Post-translationally, phosphorylated in a PINK1-dependent fashion promoting retrograde mitochondrial trafficking and clustering.

The protein localises to the endosome membrane. The protein resides in the cytoplasm. Its subcellular location is the cell junction. It is found in the focal adhesion. It localises to the cytoskeleton. Its function is as follows. GTPase-activating protein for RHOA and CDC42. Facilitates mitochondrial quality control by promoting Parkin-mediated recruitment of autophagosomes to damaged mitochondria. Negatively regulates the growth of human parainfluenza virus type 2 by inhibiting hPIV-2-mediated RHOA activation via interaction with two of its viral proteins P and V. Associates with MICAL1 on the endosomal membrane to promote Rab8-Rab10-dependent tubule extension. After dissociation of MICAL1, recruits WDR44 which connects the endoplasmic reticulum (ER) with the endosomal tubule, thereby participating in the export of a subset of neosynthesized proteins. This Homo sapiens (Human) protein is Rho GTPase-activating protein 26 (ARHGAP26).